An 89-amino-acid polypeptide reads, in one-letter code: Small ribosomal subunit protein uS15 (89 aa).

This sequence belongs to the universal ribosomal protein uS15 family. As to quaternary structure, part of the 30S ribosomal subunit. Forms a bridge to the 50S subunit in the 70S ribosome, contacting the 23S rRNA.

One of the primary rRNA binding proteins, it binds directly to 16S rRNA where it helps nucleate assembly of the platform of the 30S subunit by binding and bridging several RNA helices of the 16S rRNA. Functionally, forms an intersubunit bridge (bridge B4) with the 23S rRNA of the 50S subunit in the ribosome. This Cellvibrio japonicus (strain Ueda107) (Pseudomonas fluorescens subsp. cellulosa) protein is Small ribosomal subunit protein uS15.